Reading from the N-terminus, the 391-residue chain is MSIVRMTDLDLSGKRVLIRQDLNVPIDNGQITSEQRITASVPTIKLALEKGAAVMVTSHLGRPKEGTWSEEDSLAPVAARLTTLLGLDVPLVRDWVDGVDVAPGQVVLLENCRMNVGEGKDDEALARKYAALCDVFVMDAFGTAHRAQASTHGVIRFAPVAAGGPLLMAELDALAKALDNPAKPLLAIVAGSKVSTKLELLSNLVNKVDQLIVGGGIANTFIAAAGHDVGKSLSEPDLIPTANQIVADAKARGAEIPLPTDVVVAKQFLPDAEASVKSLDQVDADDLILDIGPQTAAHYAELIANAGTVVWNGPVGVFEFEPFSHGTETLARAIAASKAFSIAGGGDTLAAVDKYAIAKDVTYISTGGGAFLEFLEGKTLPAVAALEARGQ.

Residues 21-23 (DLN), Arg36, 59-62 (HLGR), Arg113, and Arg146 each bind substrate. ATP contacts are provided by residues Lys197, Glu319, and 345–348 (GGDT).

Belongs to the phosphoglycerate kinase family. Monomer.

It is found in the cytoplasm. It carries out the reaction (2R)-3-phosphoglycerate + ATP = (2R)-3-phospho-glyceroyl phosphate + ADP. Its pathway is carbohydrate degradation; glycolysis; pyruvate from D-glyceraldehyde 3-phosphate: step 2/5. This is Phosphoglycerate kinase from Xanthomonas campestris pv. campestris (strain 8004).